Consider the following 180-residue polypeptide: Endoribonuclease YbeY (180 aa).

Zn(2+)-binding residues include His149, His153, and His159.

Belongs to the endoribonuclease YbeY family. Requires Zn(2+) as cofactor.

It localises to the cytoplasm. In terms of biological role, single strand-specific metallo-endoribonuclease involved in late-stage 70S ribosome quality control and in maturation of the 3' terminus of the 16S rRNA. The protein is Endoribonuclease YbeY of Prochlorococcus marinus subsp. pastoris (strain CCMP1986 / NIES-2087 / MED4).